A 172-amino-acid polypeptide reads, in one-letter code: 3-hydroxydecanoyl-[acyl-carrier-protein] dehydratase (172 aa).

His-71 is an active-site residue.

Belongs to the thioester dehydratase family. FabA subfamily. As to quaternary structure, homodimer.

The protein localises to the cytoplasm. The catalysed reaction is a (3R)-hydroxyacyl-[ACP] = a (2E)-enoyl-[ACP] + H2O. The enzyme catalyses (3R)-hydroxydecanoyl-[ACP] = (2E)-decenoyl-[ACP] + H2O. It catalyses the reaction (2E)-decenoyl-[ACP] = (3Z)-decenoyl-[ACP]. The protein operates within lipid metabolism; fatty acid biosynthesis. In terms of biological role, necessary for the introduction of cis unsaturation into fatty acids. Catalyzes the dehydration of (3R)-3-hydroxydecanoyl-ACP to E-(2)-decenoyl-ACP and then its isomerization to Z-(3)-decenoyl-ACP. Can catalyze the dehydratase reaction for beta-hydroxyacyl-ACPs with saturated chain lengths up to 16:0, being most active on intermediate chain length. This chain is 3-hydroxydecanoyl-[acyl-carrier-protein] dehydratase, found in Brucella anthropi (strain ATCC 49188 / DSM 6882 / CCUG 24695 / JCM 21032 / LMG 3331 / NBRC 15819 / NCTC 12168 / Alc 37) (Ochrobactrum anthropi).